We begin with the raw amino-acid sequence, 155 residues long: Large ribosomal subunit protein uL13 (155 aa).

The protein belongs to the universal ribosomal protein uL13 family. As to quaternary structure, part of the 50S ribosomal subunit.

Its function is as follows. This protein is one of the early assembly proteins of the 50S ribosomal subunit, although it is not seen to bind rRNA by itself. It is important during the early stages of 50S assembly. This is Large ribosomal subunit protein uL13 from Rickettsia bellii (strain OSU 85-389).